Here is a 247-residue protein sequence, read N- to C-terminus: uncharacterized protein (247 aa).

This is an uncharacterized protein from Schizosaccharomyces pombe (strain 972 / ATCC 24843) (Fission yeast).